We begin with the raw amino-acid sequence, 194 residues long: Large ribosomal subunit protein bL25B (194 aa).

This sequence belongs to the bacterial ribosomal protein bL25 family. CTC subfamily. As to quaternary structure, part of the 50S ribosomal subunit; part of the 5S rRNA/L5/L18/L25 subcomplex. Contacts the 5S rRNA. Binds to the 5S rRNA independently of L5 and L18.

Functionally, this is one of the proteins that binds to the 5S RNA in the ribosome where it forms part of the central protuberance. The protein is Large ribosomal subunit protein bL25B of Symbiobacterium thermophilum (strain DSM 24528 / JCM 14929 / IAM 14863 / T).